We begin with the raw amino-acid sequence, 494 residues long: Rhamnulokinase (494 aa).

Position 18-22 (18-22 (ASSGR)) interacts with ATP. Substrate-binding positions include glycine 87 and 242–244 (HDT). The active-site Proton acceptor is the aspartate 243. An ATP-binding site is contributed by threonine 265. Asparagine 302 is a substrate binding site. Residue glutamine 310 coordinates ATP. Cysteine 360 and cysteine 377 are joined by a disulfide. Position 411 (glycine 411) interacts with ATP.

The protein belongs to the rhamnulokinase family. Mg(2+) serves as cofactor.

The catalysed reaction is L-rhamnulose + ATP = L-rhamnulose 1-phosphate + ADP + H(+). The protein operates within carbohydrate degradation; L-rhamnose degradation; glycerone phosphate from L-rhamnose: step 2/3. Functionally, involved in the catabolism of L-rhamnose (6-deoxy-L-mannose). Catalyzes the transfer of the gamma-phosphate group from ATP to the 1-hydroxyl group of L-rhamnulose to yield L-rhamnulose 1-phosphate. The polypeptide is Rhamnulokinase (Enterococcus faecalis (strain ATCC 700802 / V583)).